The sequence spans 397 residues: Subtilisin-like protease 3 (397 aa).

The signal sequence occupies residues 1 to 19 (MGCIKVISVFLAAVAAVDA). Residues 20 to 116 (RAFFHNRGGN…VEHDRVVKLA (97 aa)) constitute a propeptide that is removed on maturation. In terms of domain architecture, Inhibitor I9 spans 35-116 (SYIVVMKDGV…VEHDRVVKLA (82 aa)). A Peptidase S8 domain is found at 126–397 (TWGLGRVSHK…NKLLYNGSGR (272 aa)). Catalysis depends on charge relay system residues Asp-158 and His-189. A glycan (N-linked (GlcNAc...) asparagine) is linked at Asn-250. The active-site Charge relay system is the Ser-344. A glycan (N-linked (GlcNAc...) asparagine) is linked at Asn-393.

This sequence belongs to the peptidase S8 family.

It is found in the secreted. In terms of biological role, secreted subtilisin-like serine protease with keratinolytic activity that contributes to pathogenicity. In Arthroderma otae (strain ATCC MYA-4605 / CBS 113480) (Microsporum canis), this protein is Subtilisin-like protease 3 (SUB3).